The sequence spans 510 residues: Maturase K (510 aa).

The protein belongs to the intron maturase 2 family. MatK subfamily.

The protein localises to the plastid. The protein resides in the chloroplast. Functionally, usually encoded in the trnK tRNA gene intron. Probably assists in splicing its own and other chloroplast group II introns. In Spirodela intermedia (Intermediate duckweed), this protein is Maturase K.